Reading from the N-terminus, the 436-residue chain is GTPase Der (436 aa).

2 EngA-type G domains span residues 4–167 and 175–351; these read PTVA…PVEE and IRFS…ESQN. GTP-binding positions include 10-17, 57-61, 119-122, 181-188, 229-233, and 294-297; these read GRPNVGKS, DTGGI, NKVD, DTAGM, and NKWD. The KH-like domain maps to 352-436; sequence KRIPSAVLND…PIHLIARKRK (85 aa).

Belongs to the TRAFAC class TrmE-Era-EngA-EngB-Septin-like GTPase superfamily. EngA (Der) GTPase family. As to quaternary structure, associates with the 50S ribosomal subunit.

In terms of biological role, GTPase that plays an essential role in the late steps of ribosome biogenesis. The polypeptide is GTPase Der (Streptococcus pyogenes serotype M1).